Here is a 498-residue protein sequence, read N- to C-terminus: Elastase (498 aa).

An N-terminal signal peptide occupies residues 1 to 23; it reads MKKVSTLDLLFVAIMGVSPAAFA. Positions 24–197 are excised as a propeptide; that stretch reads ADLIDVSKLP…VLDQWEGLAH (174 aa). A disulfide bond links Cys227 and Cys255. Asp333 is a binding site for Ca(2+). Zn(2+) is bound at residue His337. Glu338 is a catalytic residue. Residues His341 and Glu361 each contribute to the Zn(2+) site. Ca(2+)-binding residues include Glu369, Glu372, Asp380, and Leu382. His420 acts as the Proton donor in catalysis. Cys467 and Cys494 are joined by a disulfide.

It belongs to the peptidase M4 family. In terms of assembly, monomer. Requires Ca(2+) as cofactor. The cofactor is Zn(2+). Post-translationally, made as a membrane-associated pre-pro-protein, which is exported to the periplasm (yielding pro-elastase) with removal of the signal peptide. Under certain conditions pro-elastase can accumulate. The pro-peptide is removed in the periplasm yielding a (mature length) 33 kDa protein, probably by autocatalysis. The pro-peptide probably remains associated with elastase and can be secreted. Further alterations (perhaps processing) seems to be required before secretion into the extracellular space.

It localises to the secreted. It catalyses the reaction Hydrolysis of proteins including elastin, collagen types III and IV, fibronectin and immunoglobulin A, generally with bulky hydrophobic group at P1'. Insulin B chain cleavage pattern identical to that of thermolysin, but specificity differs in other respects.. With respect to regulation, inhibited by phosphoramidon. Its function is as follows. Cleaves host elastin, collagen, IgG, and several complement components as well as endogenous pro-aminopeptidase. Autocatalyses processing of its pro-peptide. Processes the pro-peptide of pro-chitin-binding protein (cbpD). Involved in the pathogenesis of P.aeruginosa infections. The protein is Elastase (lasB) of Pseudomonas aeruginosa (strain ATCC 15692 / DSM 22644 / CIP 104116 / JCM 14847 / LMG 12228 / 1C / PRS 101 / PAO1).